The following is a 195-amino-acid chain: Imidazoleglycerol-phosphate dehydratase (195 aa).

The protein belongs to the imidazoleglycerol-phosphate dehydratase family.

It localises to the cytoplasm. It catalyses the reaction D-erythro-1-(imidazol-4-yl)glycerol 3-phosphate = 3-(imidazol-4-yl)-2-oxopropyl phosphate + H2O. It functions in the pathway amino-acid biosynthesis; L-histidine biosynthesis; L-histidine from 5-phospho-alpha-D-ribose 1-diphosphate: step 6/9. The polypeptide is Imidazoleglycerol-phosphate dehydratase (Burkholderia lata (strain ATCC 17760 / DSM 23089 / LMG 22485 / NCIMB 9086 / R18194 / 383)).